Consider the following 401-residue polypeptide: Dual-specificity RNA methyltransferase RlmN (401 aa).

The active-site Proton acceptor is glutamate 114. Residues aspartate 120 to aspartate 365 enclose the Radical SAM core domain. Cysteine 127 and cysteine 370 are oxidised to a cystine. 3 residues coordinate [4Fe-4S] cluster: cysteine 134, cysteine 138, and cysteine 141. Residues glycine 187 to glutamate 188, serine 219, serine 241 to histidine 243, and asparagine 327 each bind S-adenosyl-L-methionine. Catalysis depends on cysteine 370, which acts as the S-methylcysteine intermediate.

It belongs to the radical SAM superfamily. RlmN family. It depends on [4Fe-4S] cluster as a cofactor.

The protein resides in the cytoplasm. It catalyses the reaction adenosine(2503) in 23S rRNA + 2 reduced [2Fe-2S]-[ferredoxin] + 2 S-adenosyl-L-methionine = 2-methyladenosine(2503) in 23S rRNA + 5'-deoxyadenosine + L-methionine + 2 oxidized [2Fe-2S]-[ferredoxin] + S-adenosyl-L-homocysteine. The catalysed reaction is adenosine(37) in tRNA + 2 reduced [2Fe-2S]-[ferredoxin] + 2 S-adenosyl-L-methionine = 2-methyladenosine(37) in tRNA + 5'-deoxyadenosine + L-methionine + 2 oxidized [2Fe-2S]-[ferredoxin] + S-adenosyl-L-homocysteine. Specifically methylates position 2 of adenine 2503 in 23S rRNA and position 2 of adenine 37 in tRNAs. m2A2503 modification seems to play a crucial role in the proofreading step occurring at the peptidyl transferase center and thus would serve to optimize ribosomal fidelity. This is Dual-specificity RNA methyltransferase RlmN from Xanthomonas axonopodis pv. citri (strain 306).